We begin with the raw amino-acid sequence, 204 residues long: 34 kDa membrane antigen (204 aa).

Positions Met-1–Ala-19 are cleaved as a signal peptide. Cys-20 carries N-palmitoyl cysteine lipidation. Cys-20 is lipidated: S-diacylglycerol cysteine.

This sequence belongs to the UPF0423 family.

The protein localises to the cell membrane. This antigen is a pathogen-specific membrane immunogen. The sequence is that of 34 kDa membrane antigen (tpd) from Treponema pallidum (strain Nichols).